The chain runs to 1281 residues: MVRKKHPPLRNVASEGEGQTLEPTATESKVSGKNKELSADQMSENTDQSDVAELNSKEEHSTHGQEPSSSGKKDLQISGLSEKAGFNYESPSKGGSLVSFPHDEVTDRNMLAFSSPAAGGVCEPLKSPQRAEADDPQDMACTPSGDSLETKEEHKMSPKATEETGPVQSGQANCQGLSPVSVASKNPQVPSDGGVRLSKPKGDLLVNDNPDPAPLSPELQDFKCNICGYGYYGNDPTDLIKHFRKYHLGLHNRTRQDAELDSKILALHNMVQFSHSKDFQKVNRSVLSGVLQDISSSRPALLNGTYDVQVTSGGTFIGIGRKTPDCQGNTKYFRCKFCNFTYMGNSSTELEQHFLQTHPNKIKVSLPSSEGVKPSEKNSNKSIPALRASDSGDVGKWQDKMTVKAGDDTPVGYSVPIKPLDSSRQNGTEATSYYWCKFCSFSCESSSSLKLLEHYGKQHGAVQSGGLNPELNDKLPRGSVINQNDLAKSVEGEPLTKPEKGLSGAKKKDFPSKGAEDNMVTSYNCQFCDFRYSKSHGPDVIVVGPLLRHYQQLHNIHKCTIKHCPFCPRGLCSPEKHLGEITYPFACRKSNCSHCALLLLHLSPGVAGSSRVKHQCHQCSFSTPDVDVLLFHYETVHESQASDVKQEANHLLGSDGQQAVRDSKEHSCTKCDFITQVEEEISRHYRRAHSCYKCRQCSFTAADTQSLLEHFNTVHCQEQEITTANGEEGGHAIPTIKEEPKIDLKVYSLLNPDSKMGETVPESIVKREKLDDKEGLKDKIWTESSTDDLRGVAWRGADILRGSPSYTQASLGLLTPVSSSQEQTKTLRDSPNVEAAHLARPMYGLAVDTKGFLQGAPAGSEKSASLTQQYPASGESKTKDESQSLLRRRRGSGVFCANCLTTKTSLWRKNANGGYVCNACGLYQKLHSTPRPLNIIKQNNGEQIIRRRTRKRLNPEALQAEQLNKQQRGSGEEQVNGSPLERRSEDHLSESHPREIPLPSLSKYEAQGSLTKSHSAQQPVLVSQALDIHKRMQPLHIQIKSPQESTGDPGNSSSVSDGKGSSERGSPIEKYMRPAKHPNYSPPGSPIEKYQYPLFGVPFVHNDFQSEADWLRFWSKYKLSVPGNPHYLSHVPGLPNPCQNYVPYPTFNLPPHFSAVGSDNDIPLDLAIKHSRPGPTANGASKEKTKAPPTVKNEDPLNVVKTEKVDRSTQDELSTKCVHCGIVFLDEVMYALHMSCHGDSGPFQCSICQHLCTDKYDFTTHIQRGLHRNNAQAEKNGKPKE.

Disordered stretches follow at residues 1-101 (MVRK…VSFP) and 116-204 (PAAG…KGDL). Composition is skewed to polar residues over residues 21 to 31 (LEPTATESKVS) and 40 to 49 (DQMSENTDQS). A Glycyl lysine isopeptide (Lys-Gly) (interchain with G-Cter in SUMO2) cross-link involves residue K29. Residues S90 and S127 each carry the phosphoserine modification. Basic and acidic residues predominate over residues 148 to 162 (LETKEEHKMSPKATE). Positions 166–189 (PVQSGQANCQGLSPVSVASKNPQV) are enriched in polar residues. Residues S178 and S216 each carry the phosphoserine modification. The C2H2-type 1; atypical zinc finger occupies 222–247 (FKCNICGYGYYGNDPTDLIKHFRKYH). Residue K263 forms a Glycyl lysine isopeptide (Lys-Gly) (interchain with G-Cter in SUMO2) linkage. Residues 333–358 (FRCKFCNFTYMGNSSTELEQHFLQTH) form a C2H2-type 2; atypical zinc finger. Positions 365–393 (SLPSSEGVKPSEKNSNKSIPALRASDSGD) are disordered. Residues K418, K457, K474, and K488 each participate in a glycyl lysine isopeptide (Lys-Gly) (interchain with G-Cter in SUMO2) cross-link. Residues 484 to 515 (NDLAKSVEGEPLTKPEKGLSGAKKKDFPSKGA) form a disordered region. Residues 488–515 (KSVEGEPLTKPEKGLSGAKKKDFPSKGA) are compositionally biased toward basic and acidic residues. The segment at 614–637 (HQCHQCSFSTPDVDVLLFHYETVH) adopts a C2H2-type 3; atypical zinc-finger fold. Positions 635–819 (TVHESQASDV…SLGLLTPVSS (185 aa)) are mediates interaction with GLI3. A Glycyl lysine isopeptide (Lys-Gly) (interchain with G-Cter in SUMO2) cross-link involves residue K645. 2 consecutive C2H2-type zinc fingers follow at residues 666-689 (HSCT…RRAH) and 692-715 (YKCR…NTVH). Glycyl lysine isopeptide (Lys-Gly) (interchain with G-Cter in SUMO2) cross-links involve residues K737 and K755. A Glycyl lysine isopeptide (Lys-Gly) (interchain with G-Cter in SUMO1); alternate cross-link involves residue K766. A Glycyl lysine isopeptide (Lys-Gly) (interchain with G-Cter in SUMO2); alternate cross-link involves residue K766. Glycyl lysine isopeptide (Lys-Gly) (interchain with G-Cter in SUMO2) cross-links involve residues K825 and K850. The segment at 856 to 885 (APAGSEKSASLTQQYPASGESKTKDESQSL) is disordered. The span at 862 to 871 (KSASLTQQYP) shows a compositional bias: polar residues. Residues K877 and K879 each participate in a glycyl lysine isopeptide (Lys-Gly) (interchain with G-Cter in SUMO2) cross-link. The GATA-type zinc finger occupies 896 to 920 (CANCLTTKTSLWRKNANGGYVCNAC). Glycyl lysine isopeptide (Lys-Gly) (interchain with G-Cter in SUMO2) cross-links involve residues K925, K937, and K965. Polar residues predominate over residues 961-977 (EQLNKQQRGSGEEQVNG). The disordered stretch occupies residues 961 to 1000 (EQLNKQQRGSGEEQVNGSPLERRSEDHLSESHPREIPLPS). S978 carries the phosphoserine modification. Residues 980–995 (LERRSEDHLSESHPRE) are compositionally biased toward basic and acidic residues. Residues 985 to 1184 (EDHLSESHPR…PTANGASKEK (200 aa)) form a mediates interaction with RNF4 region. Residues K1003, K1012, K1030, and K1040 each participate in a glycyl lysine isopeptide (Lys-Gly) (interchain with G-Cter in SUMO2) cross-link. Residues 1040–1049 (KSPQESTGDP) show a composition bias toward polar residues. The tract at residues 1040-1078 (KSPQESTGDPGNSSSVSDGKGSSERGSPIEKYMRPAKHP) is disordered. The residue at position 1041 (S1041) is a Phosphoserine. Over residues 1050–1059 (GNSSSVSDGK) the composition is skewed to low complexity. Residues 1060-1072 (GSSERGSPIEKYM) are compositionally biased toward basic and acidic residues. The residue at position 1066 (S1066) is a Phosphoserine. Residue K1070 forms a Glycyl lysine isopeptide (Lys-Gly) (interchain with G-Cter in SUMO2) linkage. At S1085 the chain carries Phosphoserine. The interval 1163–1281 (PLDLAIKHSR…QAEKNGKPKE (119 aa)) is transcriptional repressor domain. Residues 1169–1195 (KHSRPGPTANGASKEKTKAPPTVKNED) form a disordered region. Residues K1192 and K1201 each participate in a glycyl lysine isopeptide (Lys-Gly) (interchain with G-Cter in SUMO2); alternate cross-link. Glycyl lysine isopeptide (Lys-Gly) (interchain with G-Cter in SUMO); alternate cross-links involve residues K1192 and K1201. K1201 participates in a covalent cross-link: Glycyl lysine isopeptide (Lys-Gly) (interchain with G-Cter in SUMO1); alternate. C2H2-type zinc fingers lie at residues 1215–1237 (TKCV…MSCH) and 1243–1267 (FQCS…RGLH).

As to quaternary structure, interacts with RNF4; regulates TRPS1 repressor activity. Interacts specifically with the activator form of GLI3 (GLI3A) but not with the repressor form (GLI3R). Sumoylated. Sumoylation in the repressor domain inhibits the transcription repression activity. Sumoylation on Lys-1201 is the major site. Appears to be sumoylated on multiple sites. As to expression, in the embryo, expression is detected in both visceral and skeletal tissues. Found in the maxilla, mandible, snout, prospective phalanges and in the femoral head within the developing hip. Also expressed in the hair follicles.

It localises to the nucleus. Functionally, transcriptional repressor. Binds specifically to GATA sequences and represses expression of GATA-regulated genes at selected sites and stages in vertebrate development. Regulates chondrocyte proliferation and differentiation. Executes multiple functions in proliferating chondrocytes, expanding the region of distal chondrocytes, activating proliferation in columnar cells and supporting the differentiation of columnar into hypertrophic chondrocytes. The polypeptide is Zinc finger transcription factor Trps1 (Trps1) (Mus musculus (Mouse)).